A 346-amino-acid polypeptide reads, in one-letter code: LRP2-binding protein (346 aa).

Residues Ala-58–Ala-91 form a TPR repeat. Sel1-like repeat units follow at residues Ile-92–Cys-124, Phe-132–Asn-167, Val-172–Asn-205, Leu-206–Asn-241, Val-242–Asp-276, and Ala-296–Pro-331.

As to quaternary structure, interacts with LRP2.

Its subcellular location is the cytoplasm. May act as an adapter that regulates LRP2 function. The polypeptide is LRP2-binding protein (Lrp2bp) (Rattus norvegicus (Rat)).